Consider the following 902-residue polypeptide: Androgen receptor (902 aa).

The interval 1–540 (MEVQLGLGRV…PIDYYFPPQK (540 aa)) is modulating. An interaction with ZNF318 region spans residues 1-569 (MEVQLGLGRV…GSCKVFFKRA (569 aa)). Disordered stretches follow at residues 35–146 (QNPG…LSLL) and 194–224 (QQEV…YLGG). At Ser61 the chain carries Phosphoserine; by CDK9. Position 75 is a phosphoserine (Ser75). Residues 94 to 103 (QPSQQQSASE) are compositionally biased toward low complexity. 2 stretches are compositionally biased toward polar residues: residues 196–205 (EVISEGSSSV) and 213–224 (APSSSKDSYLGG). The residue at position 221 (Tyr221) is a Phosphotyrosine; by CSK. Phosphoserine is present on Ser254. Tyr265 is subject to Phosphotyrosine; by CSK and TNK2. Ser290 bears the Phosphoserine mark. Phosphotyrosine; by CSK is present on residues Tyr305, Tyr344, Tyr355, and Tyr360. The residue at position 361 (Tyr361) is a Phosphotyrosine; by CSK and TNK2. Lys384 is covalently cross-linked (Glycyl lysine isopeptide (Lys-Gly) (interchain with G-Cter in SUMO)). Tyr391 carries the phosphotyrosine; by CSK modification. The segment at 439–465 (EGQLYGPGGGGGSSSPSDAGPVAPYGY) is disordered. Lys503 participates in a covalent cross-link: Glycyl lysine isopeptide (Lys-Gly) (interchain with G-Cter in SUMO). Phosphotyrosine; by CSK is present on residues Tyr517 and Tyr534. Positions 534–901 (YYFPPQKTCL…GKVKPIYFHT (368 aa)) are interaction with LPXN. The segment at residues 541-614 (TCLICGDEAS…AGMTLGARKL (74 aa)) is a DNA-binding region (nuclear receptor). 2 consecutive NR C4-type zinc fingers follow at residues 542–562 (CLIC…CGSC) and 578–602 (CASR…LRKC). The segment at 554 to 644 (YGALTCGSCK…TEDPSQKMTV (91 aa)) is interaction with HIPK3. An interaction with CCAR1 region spans residues 574 to 901 (QKYLCASRND…GKVKPIYFHT (328 aa)). Residues 607–901 (MTLGARKLKK…GKVKPIYFHT (295 aa)) form an interaction with KAT7 region. Position 633 is a phosphoserine (Ser633). The NR LBD domain occupies 651-882 (ECQPIFLNVL…DFPEMMAEII (232 aa)). The 17beta-hydroxy-5alpha-androstan-3-one site is built by Asn688 and Arg735. Residues Lys828 and Lys830 each participate in a glycyl lysine isopeptide (Lys-Gly) (interchain with G-Cter in ubiquitin) cross-link. Thr860 contacts 17beta-hydroxy-5alpha-androstan-3-one. Residue Tyr898 is modified to Phosphotyrosine; by CSK.

This sequence belongs to the nuclear hormone receptor family. NR3 subfamily. Binds DNA as a homodimer. Part of a ternary complex containing AR, EFCAB6/DJBP and PARK7. Interacts with HIPK3 and NR0B2 in the presence of androgen. The ligand binding domain interacts with KAT7/HBO1 in the presence of dihydrotestosterone. Interacts with EFCAB6/DJBP, PQBP1, RANBP9, RBAK, SPDEF, SRA1, TGFB1I1, ZNF318 and RREB1. Interacts with ZMIZ1/ZIMP10 and ZMIZ2/ZMIP7 which both enhance its transactivation activity. Interacts with SLC30A9 and RAD54L2/ARIP4. Interacts with MACROD1 (via macro domain). Interacts via the ligand-binding domain with LXXLL and FXXLF motifs from NCOA1, NCOA2, NCOA3 and MAGEA11. Interacts (via nuclear receptor DNA binding domain and nuclear receptor ligand binding domain) with NCOA4. The AR N-terminal poly-Gln region binds Ran resulting in enhancement of AR-mediated transactivation. Ran-binding decreases as the poly-Gln length increases. Interacts with HIP1 (via coiled coil domain). Interacts (via ligand-binding domain) with TRIM68. Interacts with TNK2. Interacts with USP26. Interacts with RNF6. Interacts (regulated by RNF6 probably through polyubiquitination) with RNF14; regulates AR transcriptional activity. Interacts with PRMT2 and TRIM24. Interacts with RACK1. Interacts with RANBP10; this interaction enhances dihydrotestosterone-induced AR transcriptional activity. Interacts with PRPF6 in a hormone-independent way; this interaction enhances dihydrotestosterone-induced AR transcriptional activity. Interacts with STK4/MST1. Interacts with ZIPK/DAPK3. Interacts with LPXN. Interacts with MAK. Part of a complex containing AR, MAK and NCOA3. Interacts with CRY1. Interacts with CCAR1 and GATA2. Interacts with BUD31. Interacts with ARID4A. Interacts with ARID4B. Interacts (via NR LBD domain) with ZBTB7A; the interaction is direct and androgen-dependent. Interacts with NCOR1. Interacts with NCOR2. Interacts with CRY2 in a ligand-dependent manner. Phosphorylated in prostate cancer cells in response to several growth factors including EGF. Phosphorylation is induced by c-Src kinase (CSK). Tyr-517 is one of the major phosphorylation sites and an increase in phosphorylation and Src kinase activity is associated with prostate cancer progression. Phosphorylation by TNK2 enhances the DNA-binding and transcriptional activity. Phosphorylation at Ser-61 by CDK9 regulates AR promoter selectivity and cell growth. Phosphorylation by PAK6 leads to AR-mediated transcription inhibition. Post-translationally, sumoylated on Lys-384 (major) and Lys-503. Ubiquitinated. Deubiquitinated by USP26. 'Lys-6' and 'Lys-27'-linked polyubiquitination by RNF6 modulates AR transcriptional activity and specificity. In terms of processing, palmitoylated by ZDHHC7 and ZDHHC21. Palmitoylation is required for plasma membrane targeting and for rapid intracellular signaling via ERK and AKT kinases and cAMP generation. As to expression, highest levels in the seminal vesicle, ventral prostate and coagulating gland with lower levels in the kidney and levator ani muscle.

The protein resides in the nucleus. The protein localises to the cytoplasm. Steroid hormone receptors are ligand-activated transcription factors that regulate eukaryotic gene expression and affect cellular proliferation and differentiation in target tissues. Transcription factor activity is modulated by bound coactivator and corepressor proteins like ZBTB7A that recruits NCOR1 and NCOR2 to the androgen response elements/ARE on target genes, negatively regulating androgen receptor signaling and androgen-induced cell proliferation. Transcription activation is also down-regulated by NR0B2. Activated, but not phosphorylated, by HIPK3 and ZIPK/DAPK3. The polypeptide is Androgen receptor (Ar) (Rattus norvegicus (Rat)).